The primary structure comprises 367 residues: F-box protein At3g56470 (367 aa).

The span at 1–18 (MVTRRRSKKKKKTKRKKQ) shows a compositional bias: basic residues. The interval 1-24 (MVTRRRSKKKKKTKRKKQSSKEKE) is disordered. The region spanning 26-81 (YQTFINLPCDLLQLVISRLPLKDNIRASAVCKTWHEACVSLRVIHTSPWLIYFSKT) is the F-box domain.

The protein is F-box protein At3g56470 of Arabidopsis thaliana (Mouse-ear cress).